A 214-amino-acid chain; its full sequence is ATP-dependent Clp protease proteolytic subunit 2 (214 aa).

S110 functions as the Nucleophile in the catalytic mechanism. Residue H135 is part of the active site.

It belongs to the peptidase S14 family. In terms of assembly, fourteen ClpP subunits assemble into 2 heptameric rings which stack back to back to give a disk-like structure with a central cavity, resembling the structure of eukaryotic proteasomes.

Its subcellular location is the cytoplasm. It catalyses the reaction Hydrolysis of proteins to small peptides in the presence of ATP and magnesium. alpha-casein is the usual test substrate. In the absence of ATP, only oligopeptides shorter than five residues are hydrolyzed (such as succinyl-Leu-Tyr-|-NHMec, and Leu-Tyr-Leu-|-Tyr-Trp, in which cleavage of the -Tyr-|-Leu- and -Tyr-|-Trp bonds also occurs).. Cleaves peptides in various proteins in a process that requires ATP hydrolysis. Has a chymotrypsin-like activity. Plays a major role in the degradation of misfolded proteins. This chain is ATP-dependent Clp protease proteolytic subunit 2, found in Mycobacterium bovis (strain ATCC BAA-935 / AF2122/97).